Here is a 1193-residue protein sequence, read N- to C-terminus: Protogenin (1193 aa).

The N-terminal stretch at 1–23 is a signal peptide; that stretch reads MAPPVRPGMLPLLLLLLLPPLGS. Ig-like domains follow at residues 24–124, 126–217, 230–317, and 322–406; these read VPGV…AHLT, STIS…ASLT, PTII…ATLT, and PSFV…ARLT. Topologically, residues 24 to 944 are extracellular; sequence VPGVWSFSEL…YYHLDQKSMT (921 aa). 2 disulfides stabilise this stretch: Cys54-Cys107 and Cys150-Cys200. A glycan (N-linked (GlcNAc...) asparagine) is linked at Asn84. N-linked (GlcNAc...) asparagine glycosylation occurs at Asn238. 2 cysteine pairs are disulfide-bonded: Cys251–Cys299 and Cys343–Cys390. 5 consecutive Fibronectin type-III domains span residues 416-510, 512-608, 613-712, 719-812, and 817-912; these read APYN…TLED, PLRP…TPKA, APKS…VRDR, PPHH…TLPE, and PPVG…VLPK. Asn625 carries an N-linked (GlcNAc...) asparagine glycan. The helical transmembrane segment at 945-965 threads the bilayer; sequence GIAVGVGIALTCILICVLILI. At 966–1193 the chain is on the cytoplasmic side; sequence YRSKARKSSA…LRHAAESVPV (228 aa). Disordered stretches follow at residues 974 to 1018 and 1078 to 1193; these read SASK…PMMP and VLIS…SVPV. 2 stretches are compositionally biased toward polar residues: residues 978–990 and 1086–1095; these read TTQS…SRAS and PSSPGQTTSF. Over residues 1105–1133 the composition is skewed to basic and acidic residues; the sequence is DTEHSANSEGSHETGDSGRFSHESNDEIH. Residues 1136 to 1150 are compositionally biased toward polar residues; it reads SVISSTPPTSNSLTC.

The protein belongs to the immunoglobulin superfamily. DCC family.

It is found in the membrane. Its function is as follows. May play a role in anteroposterior axis elongation. This chain is Protogenin, found in Rattus norvegicus (Rat).